We begin with the raw amino-acid sequence, 199 residues long: NAD(P)H dehydrogenase (quinone) (199 aa).

Positions I4–V190 constitute a Flavodoxin-like domain. Residues S10 to I15 and T79 to F81 contribute to the FMN site. Residue Y12 coordinates NAD(+). Position 99 (W99) interacts with substrate. FMN is bound by residues S114 to G119 and H134.

Belongs to the WrbA family. The cofactor is FMN.

The enzyme catalyses a quinone + NADH + H(+) = a quinol + NAD(+). It catalyses the reaction a quinone + NADPH + H(+) = a quinol + NADP(+). This is NAD(P)H dehydrogenase (quinone) from Yersinia pseudotuberculosis serotype O:1b (strain IP 31758).